The following is a 237-amino-acid chain: Phosphoribosylaminoimidazole-succinocarboxamide synthase (237 aa).

The protein belongs to the SAICAR synthetase family.

It carries out the reaction 5-amino-1-(5-phospho-D-ribosyl)imidazole-4-carboxylate + L-aspartate + ATP = (2S)-2-[5-amino-1-(5-phospho-beta-D-ribosyl)imidazole-4-carboxamido]succinate + ADP + phosphate + 2 H(+). It functions in the pathway purine metabolism; IMP biosynthesis via de novo pathway; 5-amino-1-(5-phospho-D-ribosyl)imidazole-4-carboxamide from 5-amino-1-(5-phospho-D-ribosyl)imidazole-4-carboxylate: step 1/2. The chain is Phosphoribosylaminoimidazole-succinocarboxamide synthase from Deinococcus radiodurans (strain ATCC 13939 / DSM 20539 / JCM 16871 / CCUG 27074 / LMG 4051 / NBRC 15346 / NCIMB 9279 / VKM B-1422 / R1).